Consider the following 1375-residue polypeptide: DNA-directed RNA polymerase subunit beta' (1375 aa).

Zn(2+) is bound by residues Cys70, Cys72, Cys85, and Cys88. Positions 460, 462, and 464 each coordinate Mg(2+). Zn(2+) is bound by residues Cys800, Cys874, Cys881, and Cys884.

The protein belongs to the RNA polymerase beta' chain family. The RNAP catalytic core consists of 2 alpha, 1 beta, 1 beta' and 1 omega subunit. When a sigma factor is associated with the core the holoenzyme is formed, which can initiate transcription. Requires Mg(2+) as cofactor. It depends on Zn(2+) as a cofactor.

It carries out the reaction RNA(n) + a ribonucleoside 5'-triphosphate = RNA(n+1) + diphosphate. In terms of biological role, DNA-dependent RNA polymerase catalyzes the transcription of DNA into RNA using the four ribonucleoside triphosphates as substrates. The protein is DNA-directed RNA polymerase subunit beta' of Bdellovibrio bacteriovorus (strain ATCC 15356 / DSM 50701 / NCIMB 9529 / HD100).